Consider the following 629-residue polypeptide: tRNA uridine 5-carboxymethylaminomethyl modification enzyme MnmG (629 aa).

Residues 13–18 (GGGHAG), valine 125, and serine 180 contribute to the FAD site. NAD(+) is bound at residue 273 to 287 (GPRYCPSIEDKVMRF). Glutamine 370 contributes to the FAD binding site.

This sequence belongs to the MnmG family. As to quaternary structure, homodimer. Heterotetramer of two MnmE and two MnmG subunits. FAD serves as cofactor.

The protein resides in the cytoplasm. In terms of biological role, NAD-binding protein involved in the addition of a carboxymethylaminomethyl (cmnm) group at the wobble position (U34) of certain tRNAs, forming tRNA-cmnm(5)s(2)U34. This chain is tRNA uridine 5-carboxymethylaminomethyl modification enzyme MnmG, found in Pasteurella multocida (strain Pm70).